A 245-amino-acid chain; its full sequence is 14-3-3 protein zeta (245 aa).

Belongs to the 14-3-3 family. As to quaternary structure, homodimer. In terms of tissue distribution, present in all adult tissues examined with the highest levels in the brain.

The protein resides in the cytoplasm. In terms of biological role, adapter protein implicated in the regulation of a large spectrum of both general and specialized signaling pathways. Binds to a large number of partners, usually by recognition of a phosphoserine or phosphothreonine motif. Binding generally results in the modulation of the activity of the binding partner. This Xenopus laevis (African clawed frog) protein is 14-3-3 protein zeta (ywhaz).